We begin with the raw amino-acid sequence, 233 residues long: Translation initiation factor 6 (233 aa).

It belongs to the eIF-6 family.

Its function is as follows. Binds to the 50S ribosomal subunit and prevents its association with the 30S ribosomal subunit to form the 70S initiation complex. This is Translation initiation factor 6 from Aeropyrum pernix (strain ATCC 700893 / DSM 11879 / JCM 9820 / NBRC 100138 / K1).